The chain runs to 404 residues: Ubiquitin-like modifier-activating enzyme 5 (404 aa).

A Phosphoserine modification is found at S45. ATP is bound by residues G83, D104, K127, N150, and N184. C226 and C229 together coordinate Zn(2+). Catalysis depends on C250, which acts as the Glycyl thioester intermediate. Residues C303 and C308 each coordinate Zn(2+). The short motif at 334-346 (IIHEDNEWGIELV) is the UFM1-interacting sequence (UIS) element. The segment at 347–377 (SEISEEELKKSSGPIPDLPEGIIVAYTVPQK) is linker. Residues S358 and S393 each carry the phosphoserine modification. The UFC1-binding sequence (UFC) signature appears at 389 to 404 (DSGESLEDLMAKMKNI).

Belongs to the ubiquitin-activating E1 family. UBA5 subfamily. Homodimer; homodimerization is required for UFM1 activation. Interacts (via UIS motif) with UFM1; binds UFM1 via a trans-binding mechanism in which UFM1 interacts with distinct sites in both subunits of the UBA5 homodimer. Interacts (via C-terminus) with UFC1. Interacts (via UIS motif) with GABARAPL2 and, with lower affinity, with GABARAP and GABARAPL1.

It is found in the cytoplasm. The protein localises to the nucleus. It localises to the endoplasmic reticulum membrane. Its subcellular location is the golgi apparatus. Functionally, E1-like enzyme which specifically catalyzes the first step in ufmylation. Activates UFM1 by first adenylating its C-terminal glycine residue with ATP, and thereafter linking this residue to the side chain of a cysteine residue in E1, yielding a UFM1-E1 thioester and free AMP. Activates UFM1 via a trans-binding mechanism, in which UFM1 interacts with distinct sites in both subunits of the UBA5 homodimer. Trans-binding also promotes stabilization of the UBA5 homodimer, and enhances ATP-binding. Transfer of UFM1 from UBA5 to the E2-like enzyme UFC1 also takes place using a trans mechanism. Ufmylation plays a key role in various processes, such as ribosome recycling, response to DNA damage, interferon response or reticulophagy (also called ER-phagy). Ufmylation is essential for erythroid differentiation of both megakaryocytes and erythrocytes. This Bos taurus (Bovine) protein is Ubiquitin-like modifier-activating enzyme 5.